A 421-amino-acid polypeptide reads, in one-letter code: Zinc metalloproteinase-disintegrin-like lachestatin-1 (421 aa).

One can recognise a Peptidase M12B domain in the interval 10–206; it reads KYVKLVLVAD…DMPQCILEKP (197 aa). 3 disulfide bridges follow: C121–C201, C161–C185, and C163–C168. H146 serves as a coordination point for Zn(2+). E147 is a catalytic residue. Residues H150 and H156 each coordinate Zn(2+). In terms of domain architecture, Disintegrin spans 214–299; the sequence is PPVCGNYFVE…AECTDRFQRN (86 aa). Positions 216, 219, 221, 223, 226, and 229 each coordinate Ca(2+). 14 disulfides stabilise this stretch: C217–C246, C228–C241, C230–C236, C240–C263, C254–C260, C259–C285, C272–C292, C279–C310, C303–C315, C322–C372, C337–C383, C350–C360, C367–C409, and C403–C414. The D/ECD-tripeptide motif lies at 278 to 280; that stretch reads ECD. Positions 280, 281, 283, 294, and 295 each coordinate Ca(2+). N-linked (GlcNAc...) asparagine glycosylation is present at N312.

It belongs to the venom metalloproteinase (M12B) family. P-III subfamily. P-IIIc sub-subfamily. In terms of assembly, homodimer; disulfide-linked. Zn(2+) serves as cofactor. As to expression, expressed by the venom gland.

It is found in the secreted. In terms of biological role, snake venom zinc metalloprotease that induces apoptosis in vascular endothelial cells (VEC), without degrading the extracellular matrix (it cannot cleave collagen) or inhibiting adhesion of VEC. Has also fibrinogenolytic and hemorrhagic activities. The chain is Zinc metalloproteinase-disintegrin-like lachestatin-1 from Lachesis muta rhombeata (Bushmaster).